The primary structure comprises 466 residues: Argininosuccinate lyase (466 aa).

The protein belongs to the lyase 1 family. Argininosuccinate lyase subfamily.

The protein localises to the cytoplasm. The catalysed reaction is 2-(N(omega)-L-arginino)succinate = fumarate + L-arginine. It functions in the pathway amino-acid biosynthesis; L-arginine biosynthesis; L-arginine from L-ornithine and carbamoyl phosphate: step 3/3. This chain is Argininosuccinate lyase, found in Synechococcus elongatus (strain ATCC 33912 / PCC 7942 / FACHB-805) (Anacystis nidulans R2).